A 484-amino-acid polypeptide reads, in one-letter code: Palmitoyltransferase ZDHHC1 (484 aa).

2 stretches are compositionally biased toward polar residues: residues 1–11 (MNICNKPSNKT) and 19–34 (TAPS…LQGQ). The tract at residues 1–38 (MNICNKPSNKTAPEKSVWTAPSQDSGPSPELQGQRSRR) is disordered. Topologically, residues 1–49 (MNICNKPSNKTAPEKSVWTAPSQDSGPSPELQGQRSRRNGWSWPPHPLQ) are cytoplasmic. Positions 1–268 (MNICNKPSNK…GHLLCFHIYL (268 aa)) are mediates interaction with STING1. A helical membrane pass occupies residues 50 to 70 (IVAWLLYLFFAVIGFGVLVPL). Residues 71-74 (LPHH) are Lumenal-facing. A helical membrane pass occupies residues 75–95 (WVPAGYACMGAIFAGHLVVHL). The Cytoplasmic portion of the chain corresponds to 96 to 182 (TAVSIDPADA…YRLFLHSVAS (87 aa)). Residues 131-181 (LHCNLCDVDVSARSKHCSACNKCVCGFDHHCKWLNNCVGERNYRLFLHSVA) form the DHHC domain. Residue C161 is the S-palmitoyl cysteine intermediate of the active site. The chain crosses the membrane as a helical span at residues 183 to 203 (ALLGVLLLVLVATYVFVEFFV). Residues 204-238 (NPMRLRTNQHFEVLKNHTDVWFVFLPAAPVETQAP) are Lumenal-facing. Residues 239–259 (AILALAALLILLGLLSTALLG) traverse the membrane as a helical segment. Over 260–484 (HLLCFHIYLM…GTPGGGDGLP (225 aa)) the chain is Cytoplasmic. 2 disordered regions span residues 341–415 (TQGQ…VHAG) and 444–484 (LGAP…DGLP). Over residues 364-374 (PQKKRKRRVYR) the composition is skewed to basic residues. Residues 380-392 (VLDRELPLPRLRE) show a composition bias toward basic and acidic residues. Residues 395 to 415 (TPSRRSSSSSDSTSASPVHAG) are compositionally biased toward low complexity. Over residues 475-484 (GTPGGGDGLP) the composition is skewed to gly residues.

This sequence belongs to the DHHC palmitoyltransferase family. Interacts with STING1; ZDHHC1 constitutively interacts with STING1 and in presence of DNA viruses activates it by promoting its cGAMP-induced oligomerization and the recruitment of downstream signaling components. Expressed at high levels in fetal lung and heart. Expressed at lower levels in fetal liver and brain. Also detected in adult islet cells of pancreas, Leydig cells of testis, retina and molecular layer of cerebellum.

Its subcellular location is the endosome membrane. The protein localises to the endoplasmic reticulum membrane. The protein resides in the golgi apparatus. It catalyses the reaction L-cysteinyl-[protein] + hexadecanoyl-CoA = S-hexadecanoyl-L-cysteinyl-[protein] + CoA. Its function is as follows. Palmitoyltransferase that catalyzes the addition of palmitate onto various protein substrates, such as NCDN and NLRP3. Has a palmitoyltransferase activity toward NCDN and regulates NCDN association with endosome membranes through this palmitoylation. Acts as an activator of the NLRP3 inflammasome by mediating palmitoylation of 'Cys-130' and 'Cys-958' of NLRP3, thereby promoting NLRP3 phosphorylation and activation by NEK7. Functionally, also has a palmitoyltransferase activity-independent function in DNA virus-triggered and CGAS-mediated innate immune response. Functions as an activator of STING1 by promoting its cGAMP-induced oligomerization and the recruitment of downstream signaling components. The sequence is that of Palmitoyltransferase ZDHHC1 from Mus musculus (Mouse).